We begin with the raw amino-acid sequence, 367 residues long: 3-dehydroquinate synthase (367 aa).

Residues 69–74 (DGEAFK), 103–107 (GVIGD), 127–128 (TT), Lys-140, and Lys-149 contribute to the NAD(+) site. Zn(2+)-binding residues include Glu-182, His-245, and His-262.

Belongs to the sugar phosphate cyclases superfamily. Dehydroquinate synthase family. Co(2+) is required as a cofactor. Requires Zn(2+) as cofactor. It depends on NAD(+) as a cofactor.

The protein resides in the cytoplasm. It carries out the reaction 7-phospho-2-dehydro-3-deoxy-D-arabino-heptonate = 3-dehydroquinate + phosphate. It participates in metabolic intermediate biosynthesis; chorismate biosynthesis; chorismate from D-erythrose 4-phosphate and phosphoenolpyruvate: step 2/7. Its function is as follows. Catalyzes the conversion of 3-deoxy-D-arabino-heptulosonate 7-phosphate (DAHP) to dehydroquinate (DHQ). The sequence is that of 3-dehydroquinate synthase from Ectopseudomonas mendocina (strain ymp) (Pseudomonas mendocina).